The following is a 156-amino-acid chain: Small ribosomal subunit protein uS7 (156 aa).

The protein belongs to the universal ribosomal protein uS7 family. As to quaternary structure, part of the 30S ribosomal subunit. Contacts proteins S9 and S11.

In terms of biological role, one of the primary rRNA binding proteins, it binds directly to 16S rRNA where it nucleates assembly of the head domain of the 30S subunit. Is located at the subunit interface close to the decoding center, probably blocks exit of the E-site tRNA. The sequence is that of Small ribosomal subunit protein uS7 from Cutibacterium acnes (strain DSM 16379 / KPA171202) (Propionibacterium acnes).